We begin with the raw amino-acid sequence, 193 residues long: Flagellar transcriptional regulator FlhC (193 aa).

The Zn(2+) site is built by Cys137, Cys140, Cys158, and Cys161.

This sequence belongs to the FlhC family. Heterohexamer composed of two FlhC and four FlhD subunits. Each FlhC binds a FlhD dimer, forming a heterotrimer, and a hexamer assembles by dimerization of two heterotrimers. Zn(2+) serves as cofactor.

It is found in the cytoplasm. Its function is as follows. Functions in complex with FlhD as a master transcriptional regulator that regulates transcription of several flagellar and non-flagellar operons by binding to their promoter region. Activates expression of class 2 flagellar genes, including fliA, which is a flagellum-specific sigma factor that turns on the class 3 genes. Also regulates genes whose products function in a variety of physiological pathways. This is Flagellar transcriptional regulator FlhC from Pectobacterium carotovorum (Erwinia carotovora).